The sequence spans 230 residues: Cytidylate kinase (230 aa).

12–20 contacts ATP; it reads GPSGAGKGT.

This sequence belongs to the cytidylate kinase family. Type 1 subfamily.

The protein resides in the cytoplasm. It catalyses the reaction CMP + ATP = CDP + ADP. It carries out the reaction dCMP + ATP = dCDP + ADP. In Shewanella sediminis (strain HAW-EB3), this protein is Cytidylate kinase.